A 128-amino-acid polypeptide reads, in one-letter code: Large ribosomal subunit protein bL20c (128 aa).

This sequence belongs to the bacterial ribosomal protein bL20 family.

Its subcellular location is the plastid. Functionally, binds directly to 23S ribosomal RNA and is necessary for the in vitro assembly process of the 50S ribosomal subunit. It is not involved in the protein synthesizing functions of that subunit. This is Large ribosomal subunit protein bL20c (rpl20) from Epifagus virginiana (Beechdrops).